A 183-amino-acid polypeptide reads, in one-letter code: Deoxyuridine 5'-triphosphate nucleotidohydrolase (183 aa).

Substrate is bound by residues Arg67–Gly69, Asn80, Thr84–Asp86, and Lys94. Positions Arg138–Gln183 are disordered. The segment covering Gly141–Ala150 has biased composition (gly residues).

The protein belongs to the dUTPase family. The cofactor is Mg(2+).

The enzyme catalyses dUTP + H2O = dUMP + diphosphate + H(+). It participates in pyrimidine metabolism; dUMP biosynthesis; dUMP from dCTP (dUTP route): step 2/2. Its function is as follows. This enzyme is involved in nucleotide metabolism: it produces dUMP, the immediate precursor of thymidine nucleotides and it decreases the intracellular concentration of dUTP so that uracil cannot be incorporated into DNA. In Streptomyces coelicolor (strain ATCC BAA-471 / A3(2) / M145), this protein is Deoxyuridine 5'-triphosphate nucleotidohydrolase.